Consider the following 468-residue polypeptide: Soluble pyridine nucleotide transhydrogenase (468 aa).

38–47 (ERHYNVGGGC) provides a ligand contact to FAD.

It belongs to the class-I pyridine nucleotide-disulfide oxidoreductase family. Requires FAD as cofactor.

The protein resides in the cytoplasm. The enzyme catalyses NAD(+) + NADPH = NADH + NADP(+). Functionally, conversion of NADPH, generated by peripheral catabolic pathways, to NADH, which can enter the respiratory chain for energy generation. This is Soluble pyridine nucleotide transhydrogenase from Pectobacterium atrosepticum (strain SCRI 1043 / ATCC BAA-672) (Erwinia carotovora subsp. atroseptica).